The chain runs to 771 residues: Semaphorin-3A (771 aa).

The N-terminal stretch at 1 to 20 (MGWLTRIVCLFWGVLLTARA) is a signal peptide. The 484-residue stretch at 31–514 (RLKLSYKEML…STAGVAQLPL (484 aa)) folds into the Sema domain. Asparagine 53 is a glycosylation site (N-linked (GlcNAc...) asparagine). Cysteine 103 and cysteine 114 form a disulfide bridge. Asparagine 125 carries N-linked (GlcNAc...) asparagine glycosylation. 4 disulfide bridges follow: cysteine 132–cysteine 141, cysteine 269–cysteine 381, cysteine 293–cysteine 341, and cysteine 517–cysteine 535. One can recognise an Ig-like C2-type domain in the interval 580-664 (PEERIIYGVE…GFIQTLLKVT (85 aa)). Asparagine 590 carries an N-linked (GlcNAc...) asparagine glycan. A disulfide bond links cysteine 649 and cysteine 722. Residues 728–737 (RDRKQRRQRP) show a composition bias toward basic residues. The disordered stretch occupies residues 728–771 (RDRKQRRQRPGHTPGNSNKWKHLQENKKGRNRRTHEFERAPRSV). The segment covering 749-771 (HLQENKKGRNRRTHEFERAPRSV) has biased composition (basic and acidic residues).

This sequence belongs to the semaphorin family. In terms of assembly, interacts with PLXND1. In terms of tissue distribution, expressed in the dorsal root ganglia.

The protein localises to the secreted. Its function is as follows. Involved in the development of the olfactory system and in neuronal control of puberty. Induces the collapse and paralysis of neuronal growth cones. Could serve as a ligand that guides specific growth cones by a motility-inhibiting mechanism. Binds to the complex neuropilin-1/plexin-1. This chain is Semaphorin-3A (SEMA3A), found in Homo sapiens (Human).